A 95-amino-acid polypeptide reads, in one-letter code: MRKYEVLYIIRPEVDEEARKALVERFNKVLTDNGGTVEKTTEMGKRRFAYEINDMREGFYVLLNVTAEPAATKELDRLMKISDDIVRLMITKDEK.

The protein belongs to the bacterial ribosomal protein bS6 family.

Binds together with bS18 to 16S ribosomal RNA. The protein is Small ribosomal subunit protein bS6 of Exiguobacterium sibiricum (strain DSM 17290 / CCUG 55495 / CIP 109462 / JCM 13490 / 255-15).